The chain runs to 188 residues: Translation initiation factor IF-3 (188 aa).

This sequence belongs to the IF-3 family. As to quaternary structure, monomer.

Its subcellular location is the cytoplasm. In terms of biological role, IF-3 binds to the 30S ribosomal subunit and shifts the equilibrium between 70S ribosomes and their 50S and 30S subunits in favor of the free subunits, thus enhancing the availability of 30S subunits on which protein synthesis initiation begins. This chain is Translation initiation factor IF-3, found in Fusobacterium nucleatum subsp. nucleatum (strain ATCC 25586 / DSM 15643 / BCRC 10681 / CIP 101130 / JCM 8532 / KCTC 2640 / LMG 13131 / VPI 4355).